We begin with the raw amino-acid sequence, 626 residues long: Two-component response regulator ORR24 (626 aa).

The disordered stretch occupies residues 1 to 22 (MTVEERQGRVGGHGVSGGGGGR). The segment covering 9–22 (RVGGHGVSGGGGGR) has biased composition (gly residues). The 116-residue stretch at 30–145 (RVLAVDDDPT…QLRTIWQHVI (116 aa)) folds into the Response regulatory domain. Aspartate 81 carries the post-translational modification 4-aspartylphosphate. Residues 151–162 (DAKNRGNDDDAG) show a composition bias toward basic and acidic residues. Disordered stretches follow at residues 151-215 (DAKN…KKPR) and 402-440 (PLES…RTTN). The span at 191 to 202 (NGDDGDDSDENS) shows a compositional bias: acidic residues. Positions 210–269 (TQKKPRVVWSVELHRKFVAAVNQLGIEKAVPKKILDLMNVENITRENVASHLQKYRLYLK) form a DNA-binding region, myb-like GARP. A compositionally biased stretch (polar residues) spans 402-421 (PLESSNQQHLSRVHSSSADP).

The protein belongs to the ARR family. Type-B subfamily. Post-translationally, two-component system major event consists of a His-to-Asp phosphorelay between a sensor histidine kinase (HK) and a response regulator (RR). In plants, the His-to-Asp phosphorelay involves an additional intermediate named Histidine-containing phosphotransfer protein (HPt). This multistep phosphorelay consists of a His-Asp-His-Asp sequential transfer of a phosphate group between first a His and an Asp of the HK protein, followed by the transfer to a conserved His of the HPt protein and finally the transfer to an Asp in the receiver domain of the RR protein.

The protein resides in the nucleus. Functionally, transcriptional activator that binds specific DNA sequence. Functions as a response regulator involved in His-to-Asp phosphorelay signal transduction system. Phosphorylation of the Asp residue in the receiver domain activates the ability of the protein to promote the transcription of target genes. May directly activate some type-A response regulators in response to cytokinins. The polypeptide is Two-component response regulator ORR24 (Oryza sativa subsp. japonica (Rice)).